The chain runs to 212 residues: Protein GET1 (212 aa).

Residues 1–4 (MASL) lie on the Lumenal side of the membrane. A helical membrane pass occupies residues 5–24 (LLFVLVIQIITYLINTIGAR). Residues 25–110 (TIDSLLWLLY…SFDWTIKTVR (86 aa)) are Cytoplasmic-facing. A coiled-coil region spans residues 75 to 99 (AKLRRRHDKAMEEYDVKNKKLSALK). The chain crosses the membrane as a helical span at residues 111–131 (WVSTTGVTVILQFWFSKSPIF). Topologically, residues 132 to 155 (DLPRGWLPWQVEWILSFPRAPLGT) are lumenal. A helical membrane pass occupies residues 156–172 (VSIQVWGGACGTVIALV). Residues 173 to 212 (GGAMGVAAPAFKKINQPRGEAQKMGTPRGSREQTPVRKTQ) are Cytoplasmic-facing. The tract at residues 189 to 212 (PRGEAQKMGTPRGSREQTPVRKTQ) is disordered. The segment covering 201 to 212 (GSREQTPVRKTQ) has biased composition (basic and acidic residues).

It belongs to the WRB/GET1 family. Interacts with GET3.

The protein localises to the endoplasmic reticulum membrane. In terms of biological role, required for the post-translational delivery of tail-anchored (TA) proteins to the endoplasmic reticulum. Acts as a membrane receptor for soluble GET3, which recognizes and selectively binds the transmembrane domain of TA proteins in the cytosol. The sequence is that of Protein GET1 from Arthroderma otae (strain ATCC MYA-4605 / CBS 113480) (Microsporum canis).